The following is a 1435-amino-acid chain: Sterol 3-beta-glucosyltransferase (1435 aa).

4 disordered regions span residues 1–26 (MAPDDESKKRATRKSTKRWKEEHQVA), 75–107 (SDEEYDLGKPTRQSSESHINRSSIDQKMGKFEG), 123–169 (RFSS…KDTP), and 185–206 (PSFEMPRKSKDPAEVDDERTSP). Residues 85–99 (TRQSSESHINRSSID) show a composition bias toward polar residues. Residues 123 to 133 (RFSSRSKSKSS) are compositionally biased toward low complexity. Over residues 134 to 143 (NTIARGSRTP) the composition is skewed to polar residues. A compositionally biased stretch (basic and acidic residues) spans 189–206 (MPRKSKDPAEVDDERTSP). The 48-residue stretch at 211–258 (ERLMEIFKFETPEDVLEEYPCWLMKSVLLQGYMYITTKHICFYAYLPK) folds into the GRAM 1 domain. In terms of domain architecture, PH spans 262–360 (EVVKSGYLSK…WVKALQKIIF (99 aa)). 4 disordered regions span residues 444-477 (LSTADDSRGSSKRTSFQVSRDRKLHGPSVQPNAP), 527-594 (DLNR…QASA), 610-671 (QHSP…QAEI), and 727-759 (GKKHYEEPHGIPRDNEMPSIGDDDDNRDGATPA). Residues 527–537 (DLNRLTTEHHR) are compositionally biased toward basic and acidic residues. 3 stretches are compositionally biased toward polar residues: residues 539 to 554 (NSANSISTRRSLSTNR), 628 to 647 (KSRSLTSPIKSADVSPTRTQ), and 657 to 671 (TTGSVSDSNVGQAEI). The segment covering 729–742 (KHYEEPHGIPRDNE) has biased composition (basic and acidic residues). Residues 760–826 (DRFRDHFALP…KDIENVDKEK (67 aa)) enclose the GRAM 2 domain. UDP-alpha-D-glucose-binding residues include S949, R950, D952, A1252, H1254, H1267, G1271, T1272, D1291, and Q1292.

Belongs to the glycosyltransferase 28 family.

It localises to the cytoplasm. Its subcellular location is the preautophagosomal structure membrane. It catalyses the reaction a sterol + UDP-alpha-D-glucose = a sterol 3-beta-D-glucoside + UDP + H(+). The catalysed reaction is ergosterol + UDP-alpha-D-glucose = ergosteryl 3-beta-D-glucoside + UDP + H(+). Its function is as follows. Sterol glycosyltransferase responsible for the glycosylation of ergosterol to form ergosterol-glucoside. The sequence is that of Sterol 3-beta-glucosyltransferase from Sclerotinia sclerotiorum (strain ATCC 18683 / 1980 / Ss-1) (White mold).